Consider the following 228-residue polypeptide: Calcyclin-binding protein (228 aa).

Alanine 2 bears the N-acetylalanine mark. An interaction with SIAH1 region spans residues 2-80 (ASEELQKDLE…YTVKISNYGW (79 aa)). Position 3 is a phosphoserine (serine 3). 2 positions are modified to N6-acetyllysine: lysine 8 and lysine 19. Serine 34 carries the post-translational modification Phosphoserine. One can recognise a CS domain in the interval 73–167 (VKISNYGWDQ…VENTRWDYLT (95 aa)). The interaction with SKP1 stretch occupies residues 73 to 228 (VKISNYGWDQ…EKQAKGDTEF (156 aa)). An N6-acetyllysine mark is found at lysine 85 and lysine 118. Positions 154–228 (CRKKVENTRW…EKQAKGDTEF (75 aa)) are interaction with S100A6. Positions 168–228 (QVEKERKEKE…EKQAKGDTEF (61 aa)) constitute an SGS domain.

Interacts with protein of the S100 family S100A1, S100A6, S100B, S100P and S100A12 in a calcium-dependent manner. Component of some large E3 complex at least composed of UBE2D1, SIAH1, CACYBP/SIP, SKP1, APC and TBL1X. Interacts directly with SIAH1, SIAH2 and SKP1. Post-translationally, phosphorylated on serine residues. Phosphorylated upon induction by RA or at high calcium concentrations.

The protein resides in the cytoplasm. It localises to the nucleus. Its function is as follows. May be involved in calcium-dependent ubiquitination and subsequent proteasomal degradation of target proteins. Probably serves as a molecular bridge in ubiquitin E3 complexes. Participates in the ubiquitin-mediated degradation of beta-catenin (CTNNB1). The protein is Calcyclin-binding protein (CACYBP) of Pongo abelii (Sumatran orangutan).